A 388-amino-acid chain; its full sequence is Homeobox protein XHOX-3 (388 aa).

2 disordered regions span residues 30 to 109 and 131 to 163; these read AVGS…SDFY and SAGQ…FSAC. Composition is skewed to polar residues over residues 68-81 and 91-103; these read ATGQ…QLRI and DSLS…SSSD. The homeobox DNA-binding region spans 168-227; sequence MRRYRTAFTREQIARLEKEFYRENYVSRPRRCELAAALNLPETTIKVWFQNRRMKDKRQR.

This sequence belongs to the even-skipped homeobox family.

The protein resides in the nucleus. Its function is as follows. May be required for posterior development and development of normal embryonic axial pattern. This Xenopus laevis (African clawed frog) protein is Homeobox protein XHOX-3 (xhox3).